We begin with the raw amino-acid sequence, 484 residues long: Perphorin-2 (484 aa).

N-linked (GlcNAc...) asparagine glycans are attached at residues Asn-16, Asn-240, Asn-256, Asn-265, Asn-326, Asn-330, Asn-356, and Asn-411.

It is found in the secreted. The protein resides in the extracellular space. It localises to the extracellular matrix. Functionally, may be involved in conversion of asexual males and females to the sexual pathway. This chain is Perphorin-2, found in Volvox carteri (Green alga).